The chain runs to 521 residues: Maturase K (521 aa).

It belongs to the intron maturase 2 family. MatK subfamily.

It localises to the plastid. The protein localises to the chloroplast. In terms of biological role, usually encoded in the trnK tRNA gene intron. Probably assists in splicing its own and other chloroplast group II introns. The protein is Maturase K of Kniphofia uvaria (Red-hot poker).